The following is a 258-amino-acid chain: Gamma-secretase subunit Aph-1b (258 aa).

A run of 7 helical transmembrane segments spans residues 3 to 23 (VAVF…LFMF), 32 to 52 (VIFL…SSLV), 70 to 90 (GLLI…RYGY), 118 to 138 (AYVS…VNIL), 161 to 181 (AFMT…FFEA), 187 to 207 (WWAL…TFVN), and 214 to 234 (LIPT…CAGG).

Belongs to the APH-1 family. As to quaternary structure, component of the gamma-secretase complex, a complex composed of a presenilin homodimer (PSEN1 or PSEN2), nicastrin (NCSTN), APH1 and PEN2.

The protein localises to the membrane. Its function is as follows. Essential subunit of the gamma-secretase complex, an endoprotease complex that catalyzes the intramembrane cleavage of integral proteins such as Notch receptors. It may represent a stabilizing cofactor for the presenilin homodimer that promotes the formation of a stable complex. The chain is Gamma-secretase subunit Aph-1b (aph1b) from Danio rerio (Zebrafish).